A 156-amino-acid chain; its full sequence is Eosinophil cationic-type ribonuclease 3 (156 aa).

The signal sequence occupies residues 1-25; sequence MGPKLLESRLCLLLLLRLVLMLASC. Catalysis depends on histidine 38, which acts as the Proton acceptor. Asparagine 41 is a glycosylation site (N-linked (GlcNAc...) asparagine). Disulfide bonds link cysteine 47–cysteine 106, cysteine 61–cysteine 119, cysteine 79–cysteine 134, and cysteine 86–cysteine 94. 62–66 lines the substrate pocket; the sequence is KGLNT. N-linked (GlcNAc...) asparagine glycosylation is found at asparagine 89, asparagine 96, and asparagine 107. Histidine 151 (proton donor) is an active-site residue.

It belongs to the pancreatic ribonuclease family.

The polypeptide is Eosinophil cationic-type ribonuclease 3 (Ear3) (Mus musculus (Mouse)).